Consider the following 321-residue polypeptide: Probable pectate lyase A (321 aa).

Positions 1–20 (MANFKLFLALAACLSGQALA) are cleaved as a signal peptide. The N-linked (GlcNAc...) asparagine glycan is linked to asparagine 93. The Ca(2+) site is built by aspartate 134, aspartate 163, and aspartate 167. Arginine 220 is an active-site residue.

This sequence belongs to the polysaccharide lyase 1 family. Ca(2+) serves as cofactor.

It is found in the secreted. The enzyme catalyses Eliminative cleavage of (1-&gt;4)-alpha-D-galacturonan to give oligosaccharides with 4-deoxy-alpha-D-galact-4-enuronosyl groups at their non-reducing ends.. Functionally, pectinolytic enzyme consist of four classes of enzymes: pectin lyase, polygalacturonase, pectin methylesterase and rhamnogalacturonase. Among pectinolytic enzymes, pectin lyase is the most important in depolymerization of pectin, since it cleaves internal glycosidic bonds of highly methylated pectins. Favors pectate, the anion, over pectin, the methyl ester. The sequence is that of Probable pectate lyase A (plyA) from Aspergillus flavus (strain ATCC 200026 / FGSC A1120 / IAM 13836 / NRRL 3357 / JCM 12722 / SRRC 167).